The following is a 133-amino-acid chain: Aspartate 1-decarboxylase (133 aa).

Catalysis depends on S26, which acts as the Schiff-base intermediate with substrate; via pyruvic acid. S26 carries the pyruvic acid (Ser) modification. Substrate is bound at residue T58. Y59 functions as the Proton donor in the catalytic mechanism. Residue 74–76 coordinates substrate; that stretch reads GAA.

Belongs to the PanD family. Heterooctamer of four alpha and four beta subunits. Pyruvate is required as a cofactor. In terms of processing, is synthesized initially as an inactive proenzyme, which is activated by self-cleavage at a specific serine bond to produce a beta-subunit with a hydroxyl group at its C-terminus and an alpha-subunit with a pyruvoyl group at its N-terminus.

It is found in the cytoplasm. It carries out the reaction L-aspartate + H(+) = beta-alanine + CO2. It participates in cofactor biosynthesis; (R)-pantothenate biosynthesis; beta-alanine from L-aspartate: step 1/1. Its function is as follows. Catalyzes the pyruvoyl-dependent decarboxylation of aspartate to produce beta-alanine. This is Aspartate 1-decarboxylase from Legionella pneumophila (strain Lens).